Here is a 316-residue protein sequence, read N- to C-terminus: Small ribosomal subunit protein RACK1 (316 aa).

7 WD repeats span residues Gly-13–Asn-44, Gly-61–Glu-91, Gly-103–Asn-133, Gly-146–Glu-178, Gly-190–Asp-220, Asn-231–Asp-260, and Ser-281–Gly-311.

This sequence belongs to the WD repeat G protein beta family. Ribosomal protein RACK1 subfamily. As to quaternary structure, component of the small ribosomal subunit (SSU). Mature N.crassa ribosomes consist of a small (40S) and a large (60S) subunit. The 40S small subunit contains 1 molecule of ribosomal RNA (18S rRNA) and at least 32 different proteins. The large 60S subunit contains 3 rRNA molecules (26S, 5.8S and 5S rRNA) and at least 42 different proteins.

Its subcellular location is the cytoplasm. Functionally, component of the ribosome, a large ribonucleoprotein complex responsible for the synthesis of proteins in the cell. The small ribosomal subunit (SSU) binds messenger RNAs (mRNAs) and translates the encoded message by selecting cognate aminoacyl-transfer RNA (tRNA) molecules. The large subunit (LSU) contains the ribosomal catalytic site termed the peptidyl transferase center (PTC), which catalyzes the formation of peptide bonds, thereby polymerizing the amino acids delivered by tRNAs into a polypeptide chain. The nascent polypeptides leave the ribosome through a tunnel in the LSU and interact with protein factors that function in enzymatic processing, targeting, and the membrane insertion of nascent chains at the exit of the ribosomal tunnel. Required to activate general amino acid control under conditions of amino acid limitation in the vegetative growth phase, and for formation of protoperithecia in preparation for the sexual phase of the life cycle of N.crassa. The protein is Small ribosomal subunit protein RACK1 (cpc-2) of Neurospora crassa (strain ATCC 24698 / 74-OR23-1A / CBS 708.71 / DSM 1257 / FGSC 987).